The following is a 497-amino-acid chain: RNA polymerase sigma factor SigA (497 aa).

Disordered stretches follow at residues 1–20 (MSTD…PELS) and 62–86 (KTLH…HAPL). Over residues 63 to 73 (TLHENKESDVP) the composition is skewed to basic and acidic residues. The segment covering 74–84 (KKRRGRKPKHA) has biased composition (basic residues). A sigma-70 factor domain-2 region spans residues 250-320 (LVTSNLRLVV…TRAIADQART (71 aa)). The Interaction with polymerase core subunit RpoC signature appears at 274 to 277 (DLIQ). Positions 329 to 410 (ETINRLAKAE…DTDAQTPDEF (82 aa)) are sigma-70 factor domain-3. Residues 423 to 478 (LLNNNLSEQEELIVRMRIGMPPYNEPKTLDEVGQKILIPREKIRQIENKAIRKLRH) form a sigma-70 factor domain-4 region. The H-T-H motif DNA-binding region spans 451–470 (LDEVGQKILIPREKIRQIEN).

It belongs to the sigma-70 factor family. RpoD/SigA subfamily. In terms of assembly, interacts transiently with the RNA polymerase catalytic core.

It localises to the cytoplasm. Its function is as follows. Sigma factors are initiation factors that promote the attachment of RNA polymerase to specific initiation sites and are then released. This sigma factor is the primary sigma factor during exponential growth. In Mycoplasma genitalium (strain ATCC 33530 / DSM 19775 / NCTC 10195 / G37) (Mycoplasmoides genitalium), this protein is RNA polymerase sigma factor SigA.